The primary structure comprises 268 residues: GTP cyclohydrolase FolE2 (268 aa).

The protein belongs to the GTP cyclohydrolase IV family.

The enzyme catalyses GTP + H2O = 7,8-dihydroneopterin 3'-triphosphate + formate + H(+). Its pathway is cofactor biosynthesis; 7,8-dihydroneopterin triphosphate biosynthesis; 7,8-dihydroneopterin triphosphate from GTP: step 1/1. In terms of biological role, converts GTP to 7,8-dihydroneopterin triphosphate. The chain is GTP cyclohydrolase FolE2 from Paraburkholderia xenovorans (strain LB400).